The sequence spans 433 residues: Enolase (433 aa).

Residues 37-59 (RAAVPSGASTGEHEAVELRDGDK) form a disordered region. Residues 47–59 (GEHEAVELRDGDK) are compositionally biased toward basic and acidic residues. Glutamine 166 contacts (2R)-2-phosphoglycerate. The active-site Proton donor is glutamate 208. Mg(2+) contacts are provided by aspartate 245, glutamate 291, and aspartate 318. The (2R)-2-phosphoglycerate site is built by lysine 343, arginine 372, serine 373, and lysine 394. Catalysis depends on lysine 343, which acts as the Proton acceptor.

This sequence belongs to the enolase family. Mg(2+) is required as a cofactor.

Its subcellular location is the cytoplasm. The protein resides in the secreted. It is found in the cell surface. The enzyme catalyses (2R)-2-phosphoglycerate = phosphoenolpyruvate + H2O. The protein operates within carbohydrate degradation; glycolysis; pyruvate from D-glyceraldehyde 3-phosphate: step 4/5. Its function is as follows. Catalyzes the reversible conversion of 2-phosphoglycerate (2-PG) into phosphoenolpyruvate (PEP). It is essential for the degradation of carbohydrates via glycolysis. This is Enolase from Leptospira biflexa serovar Patoc (strain Patoc 1 / Ames).